The primary structure comprises 169 residues: Probable RNA-binding protein EIF1AD (169 aa).

Positions 14–89 (VLGDYVQPTE…VKAEIAFILY (76 aa)) constitute an S1-like domain. Residues 115 to 169 (AKEKESSGIQSTEAQAKPQGEDSETDDDSGLFVNTNHVHYEDSEEESESEEDEEN) are disordered. Residues 156–169 (DSEEESESEEDEEN) show a composition bias toward acidic residues.

The protein belongs to the EIF1AD family.

The protein localises to the nucleus. May play a role into cellular response to oxidative stress. May decrease cell proliferation. The protein is Probable RNA-binding protein EIF1AD (eif1ad) of Xenopus laevis (African clawed frog).